A 215-amino-acid chain; its full sequence is MTARGTPSRFLASVLHNGLGRYVQQLQRLSFSVSRDGASSRGAREFVEREVIDFARRNPGVVIYVNSRPCCVPRVVAEYLNGAVREESIHCKSVEEISTLVQKLADQSGLDVIRIRKPFHTDNPSIQGQWHPFTNKPTTFRGLRPREVQDPAPAQDTGLRLSAVAPQILLPGWPDPPDLPTVDPISSSLTSAPAPMLSAVSCLPIVPALTTVCSA.

It belongs to the mitochondrion-specific ribosomal protein mL43 family. In terms of assembly, component of the mitochondrial large ribosomal subunit (mt-LSU). Mature mammalian 55S mitochondrial ribosomes consist of a small (28S) and a large (39S) subunit. The 28S small subunit contains a 12S ribosomal RNA (12S mt-rRNA) and 30 different proteins. The 39S large subunit contains a 16S rRNA (16S mt-rRNA), a copy of mitochondrial valine transfer RNA (mt-tRNA(Val)), which plays an integral structural role, and 52 different proteins. High relative levels in skeletal muscle and testis. Lower levels of expression in the heart, brain, placenta, lung, liver, kidney, pancreas, spleen, thymus, prostate, ovary, small intestine, colon and leukocytes. Expression is coregulated with TWNK.

The protein localises to the mitochondrion. The chain is Large ribosomal subunit protein mL43 (MRPL43) from Homo sapiens (Human).